Consider the following 196-residue polypeptide: FMN-dependent NADH:quinone oxidoreductase (196 aa).

Ser-10 provides a ligand contact to FMN.

Belongs to the azoreductase type 1 family. As to quaternary structure, homodimer. It depends on FMN as a cofactor.

It carries out the reaction 2 a quinone + NADH + H(+) = 2 a 1,4-benzosemiquinone + NAD(+). It catalyses the reaction N,N-dimethyl-1,4-phenylenediamine + anthranilate + 2 NAD(+) = 2-(4-dimethylaminophenyl)diazenylbenzoate + 2 NADH + 2 H(+). Functionally, quinone reductase that provides resistance to thiol-specific stress caused by electrophilic quinones. In terms of biological role, also exhibits azoreductase activity. Catalyzes the reductive cleavage of the azo bond in aromatic azo compounds to the corresponding amines. The polypeptide is FMN-dependent NADH:quinone oxidoreductase (Cereibacter sphaeroides (strain ATCC 17023 / DSM 158 / JCM 6121 / CCUG 31486 / LMG 2827 / NBRC 12203 / NCIMB 8253 / ATH 2.4.1.) (Rhodobacter sphaeroides)).